A 273-amino-acid chain; its full sequence is Small ribosomal subunit protein eS1 (273 aa).

The protein belongs to the eukaryotic ribosomal protein eS1 family. As to quaternary structure, component of the small ribosomal subunit. Mature ribosomes consist of a small (40S) and a large (60S) subunit. The 40S subunit contains about 33 different proteins and 1 molecule of RNA (18S). The 60S subunit contains about 49 different proteins and 3 molecules of RNA (25S, 5.8S and 5S).

The protein resides in the cytoplasm. The polypeptide is Small ribosomal subunit protein eS1 (rps3a) (Dictyostelium discoideum (Social amoeba)).